The following is a 92-amino-acid chain: Small ribosomal subunit protein uS19c (92 aa).

Belongs to the universal ribosomal protein uS19 family.

Its subcellular location is the plastid. The protein localises to the chloroplast. Functionally, protein S19 forms a complex with S13 that binds strongly to the 16S ribosomal RNA. This is Small ribosomal subunit protein uS19c from Chaetosphaeridium globosum (Charophycean green alga).